Here is a 519-residue protein sequence, read N- to C-terminus: Mannuronan C5-epimerase (519 aa).

An N-terminal signal peptide occupies residues 1–25; that stretch reads MNLHPHLRHSLLASALLLASGLATA. PbH1 repeat units follow at residues 219 to 246, 281 to 303, 305 to 328, 330 to 352, 354 to 376, and 377 to 399; these read GTET…SISQ, TQDF…DPHD, SHRL…IVSR, VNDS…VIDR, SVNN…TLYE, and SGDN…RVRN. The Proton acceptor role is filled by His302.

The protein belongs to the D-mannuronate C5-epimerase family.

It localises to the periplasm. The enzyme catalyses [(1-&gt;4)-beta-D-mannuronosyl](n) = [alginate](n). It participates in glycan biosynthesis; alginate biosynthesis. Its function is as follows. Catalyzes the epimerization of beta-D-mannuronate to alpha-L-guluronate during the synthesis of the linear polysaccharide alginate. In addition, is part of a periplasmic protein complex that protects alginate from degradation by AlgL by channeling the newly formed alginate polymer through a scaffold that transfers the alginate polymer through the periplasmic space to the outer membrane secretin AlgE. The chain is Mannuronan C5-epimerase (algG) from Pseudomonas putida (strain ATCC 47054 / DSM 6125 / CFBP 8728 / NCIMB 11950 / KT2440).